An 844-amino-acid polypeptide reads, in one-letter code: Saxiphilin (844 aa).

An N-terminal signal peptide occupies residues 1–19 (MAPTFQTALFFTIISLSFA). The region spanning 26-106 (VRWCAISDLE…IAEPYSSNRD (81 aa)) is the Transferrin-like 1; first part domain. Intrachain disulfides connect cysteine 29–cysteine 64, cysteine 39–cysteine 55, cysteine 110–cysteine 130, cysteine 141–cysteine 148, cysteine 150–cysteine 172, cysteine 180–cysteine 202, cysteine 222–cysteine 244, cysteine 277–cysteine 360, cysteine 322–cysteine 335, cysteine 332–cysteine 343, cysteine 388–cysteine 402, cysteine 495–cysteine 527, cysteine 505–cysteine 518, cysteine 552–cysteine 839, cysteine 570–cysteine 799, cysteine 607–cysteine 685, cysteine 641–cysteine 655, cysteine 652–cysteine 668, and cysteine 725–cysteine 739. Thyroglobulin type-1 domains are found at residues 107-172 (LQKC…RATC) and 177-244 (LPKC…PATC). The interval 109–249 (KCLKERQQAL…IPATCQKHDL (141 aa)) is absent in transferrins. Residues 245-482 (QKHDLVTTCH…LFHAMKALTG (238 aa)) form the Transferrin-like 1; second part domain. A Transferrin-like 2 domain is found at 492–828 (VRWCTINKLE…YYTTVYGASR (337 aa)).

The protein belongs to the transferrin family. In terms of assembly, monomer. In terms of tissue distribution, plasma. Highest levels of transcripts found in the liver, the lung, the pancreas and the brain.

It localises to the secreted. Functionally, binds specifically to the neurotoxin saxitoxin. Its physiological role may be to transport or sequester an endogenous organic molecule other than Fe(3+). It may participate in a detoxification mechanism for neutralizing a microbial toxin. This is Saxiphilin from Aquarana catesbeiana (American bullfrog).